A 427-amino-acid polypeptide reads, in one-letter code: Glucose-6-phosphate isomerase (427 aa).

Glu-281 serves as the catalytic Proton donor. Catalysis depends on residues His-302 and Lys-417.

It belongs to the GPI family.

It is found in the cytoplasm. It carries out the reaction alpha-D-glucose 6-phosphate = beta-D-fructose 6-phosphate. It functions in the pathway carbohydrate biosynthesis; gluconeogenesis. It participates in carbohydrate degradation; glycolysis; D-glyceraldehyde 3-phosphate and glycerone phosphate from D-glucose: step 2/4. In terms of biological role, catalyzes the reversible isomerization of glucose-6-phosphate to fructose-6-phosphate. The chain is Glucose-6-phosphate isomerase from Mycoplasmopsis pulmonis (strain UAB CTIP) (Mycoplasma pulmonis).